Consider the following 203-residue polypeptide: Probable GTP-binding protein EngB (203 aa).

The EngB-type G domain occupies 22 to 195 (GIPEIALAGR…WEEIVNQYNQ (174 aa)). GTP is bound by residues 30-37 (GRSNVGKS), 57-61 (GKTRT), 75-78 (DLPG), 142-145 (TKAD), and 174-176 (VSS). Positions 37 and 59 each coordinate Mg(2+).

This sequence belongs to the TRAFAC class TrmE-Era-EngA-EngB-Septin-like GTPase superfamily. EngB GTPase family. Mg(2+) serves as cofactor.

Its function is as follows. Necessary for normal cell division and for the maintenance of normal septation. This is Probable GTP-binding protein EngB from Clostridioides difficile (strain 630) (Peptoclostridium difficile).